Reading from the N-terminus, the 264-residue chain is Small ribosomal subunit protein eS1B (264 aa).

The disordered stretch occupies residues glycine 233–valine 264. Residues alanine 242–glycine 255 are compositionally biased toward basic and acidic residues.

The protein belongs to the eukaryotic ribosomal protein eS1 family. As to quaternary structure, component of the small ribosomal subunit. Mature ribosomes consist of a small (40S) and a large (60S) subunit. The 40S subunit contains about 33 different proteins and 1 molecule of RNA (18S). The 60S subunit contains about 49 different proteins and 3 molecules of RNA (28S, 5.8S and 5S). Part of the small subunit (SSU) processome, composed of more than 70 proteins and the RNA chaperone small nucleolar RNA (snoRNA) U3.

It localises to the cytoplasm. It is found in the nucleus. The protein localises to the nucleolus. Its function is as follows. Component of the small ribosomal subunit. The ribosome is a large ribonucleoprotein complex responsible for the synthesis of proteins in the cell. Part of the small subunit (SSU) processome, first precursor of the small eukaryotic ribosomal subunit. During the assembly of the SSU processome in the nucleolus, many ribosome biogenesis factors, an RNA chaperone and ribosomal proteins associate with the nascent pre-rRNA and work in concert to generate RNA folding, modifications, rearrangements and cleavage as well as targeted degradation of pre-ribosomal RNA by the RNA exosome. May play a role during erythropoiesis. The chain is Small ribosomal subunit protein eS1B (rps3a-b) from Xenopus laevis (African clawed frog).